Reading from the N-terminus, the 278-residue chain is Shikimate dehydrogenase (NADP(+)) (278 aa).

Shikimate-binding positions include 19–21 (SRS) and T66. The active-site Proton acceptor is the K70. Shikimate-binding residues include N91 and D106. NADP(+)-binding positions include 129–133 (GAGGA) and F221. Y223 serves as a coordination point for shikimate. Position 242 (G242) interacts with NADP(+).

This sequence belongs to the shikimate dehydrogenase family. Homodimer.

The enzyme catalyses shikimate + NADP(+) = 3-dehydroshikimate + NADPH + H(+). It participates in metabolic intermediate biosynthesis; chorismate biosynthesis; chorismate from D-erythrose 4-phosphate and phosphoenolpyruvate: step 4/7. In terms of biological role, involved in the biosynthesis of the chorismate, which leads to the biosynthesis of aromatic amino acids. Catalyzes the reversible NADPH linked reduction of 3-dehydroshikimate (DHSA) to yield shikimate (SA). This Anaeromyxobacter dehalogenans (strain 2CP-1 / ATCC BAA-258) protein is Shikimate dehydrogenase (NADP(+)).